The sequence spans 103 residues: Small ribosomal subunit protein uS10 (103 aa).

Belongs to the universal ribosomal protein uS10 family. Part of the 30S ribosomal subunit.

In terms of biological role, involved in the binding of tRNA to the ribosomes. The chain is Small ribosomal subunit protein uS10 from Psychromonas ingrahamii (strain DSM 17664 / CCUG 51855 / 37).